The following is a 460-amino-acid chain: V-type ATP synthase beta chain (460 aa).

It belongs to the ATPase alpha/beta chains family.

Its function is as follows. Produces ATP from ADP in the presence of a proton gradient across the membrane. The V-type beta chain is a regulatory subunit. The chain is V-type ATP synthase beta chain from Clostridium perfringens (strain ATCC 13124 / DSM 756 / JCM 1290 / NCIMB 6125 / NCTC 8237 / Type A).